A 256-amino-acid polypeptide reads, in one-letter code: 5-keto-4-deoxy-D-glucarate aldolase (256 aa).

His50 (proton acceptor) is an active-site residue. Gln151 provides a ligand contact to substrate. Glu153 contacts Mg(2+). Positions 178 and 179 each coordinate substrate. Asp179 is a Mg(2+) binding site.

This sequence belongs to the HpcH/HpaI aldolase family. KDGluc aldolase subfamily. In terms of assembly, homohexamer; trimer of dimers. Requires Mg(2+) as cofactor.

It catalyses the reaction 5-dehydro-4-deoxy-D-glucarate = 2-hydroxy-3-oxopropanoate + pyruvate. The catalysed reaction is 2-dehydro-3-deoxy-D-glucarate = 2-hydroxy-3-oxopropanoate + pyruvate. It functions in the pathway carbohydrate acid metabolism; galactarate degradation; D-glycerate from galactarate: step 2/3. Functionally, catalyzes the reversible retro-aldol cleavage of both 5-keto-4-deoxy-D-glucarate and 2-keto-3-deoxy-D-glucarate to pyruvate and tartronic semialdehyde. The protein is 5-keto-4-deoxy-D-glucarate aldolase of Shigella dysenteriae serotype 1 (strain Sd197).